The chain runs to 332 residues: Putative symporter YfeH (332 aa).

Belongs to the bile acid:sodium symporter (BASS) (TC 2.A.28) family.

This chain is Putative symporter YfeH (yfeH), found in Escherichia coli (strain K12).